The following is a 727-amino-acid chain: Glucans biosynthesis glucosyltransferase H (727 aa).

The tract at residues 18 to 43 (SAMPNERPGAMEPQSLSQMPEGFPRR) is disordered. 7 helical membrane-spanning segments follow: residues 58–78 (FFVVGGALALSAFAIYEMGAV), 94–114 (LFAINFCWIALAFCSGIAGFF), 278–298 (LQQFAARIYGPVIGTGLGWWV), 408–428 (IMAYLSSPFWLLLILTGLMLA), 460–480 (LFYITMGVLFGPKIFGVLLLL), 496–516 (ILSVIFEVILSALIAPIMMFI), and 572–592 (LLAWMSPALIGLWLAVPISAW).

It belongs to the glycosyltransferase 2 family. OpgH subfamily.

It localises to the cell inner membrane. It participates in glycan metabolism; osmoregulated periplasmic glucan (OPG) biosynthesis. In terms of biological role, involved in the biosynthesis of osmoregulated periplasmic glucans (OPGs). This Shewanella sp. (strain ANA-3) protein is Glucans biosynthesis glucosyltransferase H.